We begin with the raw amino-acid sequence, 76 residues long: UPF0235 protein MMAR_2910 (76 aa).

Belongs to the UPF0235 family.

The sequence is that of UPF0235 protein MMAR_2910 from Mycobacterium marinum (strain ATCC BAA-535 / M).